The following is a 790-amino-acid chain: cAMP and cAMP-inhibited cGMP 3',5'-cyclic phosphodiesterase 10A (790 aa).

3',5'-cyclic AMP-binding positions include Arg-290 to Cys-291, Ile-334 to Ala-335, Thr-368, Gln-387, and His-519. One can recognise a PDEase domain in the interval Thr-446 to Glu-763. The Proton donor role is filled by His-519. His-519 provides a ligand contact to 3',5'-cyclic GMP. His-523, His-557, Asp-558, and Asp-668 together coordinate a divalent metal cation. Gln-720 serves as a coordination point for 3',5'-cyclic AMP. Gln-720 contributes to the 3',5'-cyclic GMP binding site. The interval Trp-768 to Asp-790 is disordered. The segment covering Thr-780 to Asp-790 has biased composition (basic and acidic residues).

This sequence belongs to the cyclic nucleotide phosphodiesterase family. As to quaternary structure, homodimer. It depends on a divalent metal cation as a cofactor. In terms of tissue distribution, detected in striatum (at protein level). Detected in testis and brain.

Its subcellular location is the cytoplasm. The protein localises to the cytosol. It catalyses the reaction a nucleoside 3',5'-cyclic phosphate + H2O = a nucleoside 5'-phosphate + H(+). The catalysed reaction is 3',5'-cyclic AMP + H2O = AMP + H(+). It carries out the reaction 3',5'-cyclic GMP + H2O = GMP + H(+). The protein operates within purine metabolism; 3',5'-cyclic AMP degradation; AMP from 3',5'-cyclic AMP: step 1/1. Its pathway is purine metabolism; 3',5'-cyclic GMP degradation; GMP from 3',5'-cyclic GMP: step 1/1. In terms of biological role, plays a role in signal transduction by regulating the intracellular concentration of cyclic nucleotides. Can hydrolyze both cAMP and cGMP, but has higher affinity for cAMP and is more efficient with cAMP as substrate. May play a critical role in regulating cAMP and cGMP levels in the striatum, a region of the brain that contributes to the control of movement and cognition. This Mus musculus (Mouse) protein is cAMP and cAMP-inhibited cGMP 3',5'-cyclic phosphodiesterase 10A (Pde10a).